Here is a 60-residue protein sequence, read N- to C-terminus: Putative transcriptional regulator XtpA (60 aa).

Functionally, controls the expression of small non-coding RNA GcvB, which represses the expression of many amino acid transporter proteins and uptake of aminoglycoside antibiotics in cells. Might be a transcriptional activator. An RNA (xtr) with a tRNA-like fold possibly derived from tRNA-Arg(UCG) is encoded entirely within the protein; xtr does not have the sequence corresponding to tRNA anticodon or variable arms. 10 synonymous codon changes in the xtr region of xtpA have the same phenotype as a deletion mutation, suggesting the mRNA secondary structure is important for function. The polypeptide is Putative transcriptional regulator XtpA (Escherichia coli (strain K12)).